The chain runs to 338 residues: Glutamyl-tRNA reductase (338 aa).

Substrate is bound by residues 50–53, S102, 107–109, and Q113; these read TCHR and ETE. The Nucleophile role is filled by C51. An NADP(+)-binding site is contributed by 181–186; sequence GYSDIN.

The protein belongs to the glutamyl-tRNA reductase family. As to quaternary structure, homodimer.

The enzyme catalyses (S)-4-amino-5-oxopentanoate + tRNA(Glu) + NADP(+) = L-glutamyl-tRNA(Glu) + NADPH + H(+). The protein operates within porphyrin-containing compound metabolism; protoporphyrin-IX biosynthesis; 5-aminolevulinate from L-glutamyl-tRNA(Glu): step 1/2. Its function is as follows. Catalyzes the NADPH-dependent reduction of glutamyl-tRNA(Glu) to glutamate 1-semialdehyde (GSA). In Chlamydia caviae (strain ATCC VR-813 / DSM 19441 / 03DC25 / GPIC) (Chlamydophila caviae), this protein is Glutamyl-tRNA reductase.